We begin with the raw amino-acid sequence, 196 residues long: PRADC1-like protein (196 aa).

The first 18 residues, methionine 1–alanine 18, serve as a signal peptide directing secretion. The 99-residue stretch at isoleucine 73 to histidine 171 folds into the PA domain. An N-linked (GlcNAc...) asparagine glycan is attached at asparagine 179.

The protein localises to the secreted. Its function is as follows. May be involved in iversification of muscle cell fates. This Drosophila melanogaster (Fruit fly) protein is PRADC1-like protein.